The following is a 95-amino-acid chain: Opiscorpine-2 (95 aa).

An N-terminal signal peptide occupies residues methionine 1–cysteine 19. Positions glutamate 55–tyrosine 95 constitute a BetaSPN-type CS-alpha/beta domain. Disulfide bonds link cysteine 58–cysteine 82, cysteine 68–cysteine 87, and cysteine 72–cysteine 89.

It belongs to the long chain scorpion toxin family. Class 3 subfamily. As to expression, expressed by the venom gland.

It localises to the secreted. Its function is as follows. Has antimicrobial activity against yeasts and bacteria. The polypeptide is Opiscorpine-2 (Opistophthalmus carinatus (African yellow leg scorpion)).